The sequence spans 275 residues: 2,3,4,5-tetrahydropyridine-2,6-dicarboxylate N-succinyltransferase (275 aa).

Residues Arg-106 and Asp-143 each contribute to the substrate site.

The protein belongs to the transferase hexapeptide repeat family. In terms of assembly, homotrimer.

The protein localises to the cytoplasm. The enzyme catalyses (S)-2,3,4,5-tetrahydrodipicolinate + succinyl-CoA + H2O = (S)-2-succinylamino-6-oxoheptanedioate + CoA. It functions in the pathway amino-acid biosynthesis; L-lysine biosynthesis via DAP pathway; LL-2,6-diaminopimelate from (S)-tetrahydrodipicolinate (succinylase route): step 1/3. The protein is 2,3,4,5-tetrahydropyridine-2,6-dicarboxylate N-succinyltransferase of Ralstonia nicotianae (strain ATCC BAA-1114 / GMI1000) (Ralstonia solanacearum).